Reading from the N-terminus, the 243-residue chain is Vesicle-associated membrane protein-associated protein B (243 aa).

Residue alanine 2 is modified to N-acetylalanine. Residues 2-218 (AKVEQVLSLE…PASAMAGKEE (217 aa)) are Cytoplasmic-facing. The MSP domain maps to 7 to 124 (VLSLEPQHEL…MDSKLRCVFE (118 aa)). Serine 146 is subject to Phosphoserine. A Glycyl lysine isopeptide (Lys-Gly) (interchain with G-Cter in SUMO1) cross-link involves residue lysine 147. The residue at position 150 (threonine 150) is a Phosphothreonine. Serine 158, serine 159, and serine 160 each carry phosphoserine. A coiled-coil region spans residues 161–196 (LDDTEVKKVMEECKRLQSEVQRLREENKQFKEEDGL). Residues 186–197 (ENKQFKEEDGLR) show a composition bias toward basic and acidic residues. The tract at residues 186–214 (ENKQFKEEDGLRMRKTAQSNSPAPASAMA) is disordered. Phosphoserine is present on serine 206. The chain crosses the membrane as a helical; Anchor for type IV membrane protein span at residues 219 to 239 (GLSTRLLALVVLFFIVGVIIG).

Belongs to the VAMP-associated protein (VAP) (TC 9.B.17) family. As to quaternary structure, homodimer, and heterodimer with VAPA. Interacts with VAMP1 and VAMP2. Interacts (via MSP domain) with ZFYVE27. Interacts with RMDN3. Interacts with KIF5A in a ZFYVE27-dependent manner. Interacts (via MSP domain) with STARD3 (via phospho-FFAT motif). Interacts with STARD3NL (via FFAT motif). Interacts with CERT1. Interacts with PLEKHA3 and SACM1L to form a ternary complex. Interacts with VPS13A (via FFAT motif). Interacts with RB1CC1 (via phosphorylated FFAT motif), MIGA2 (via phosphorylated FFAT motif), RMDN3 (via phosphorylated FFAT motif), OSBPL1A (via FFAT motif), KCNB1 (via phosphorylated FFAT motif) and KCNB2 (via phosphorylated FFAT motif). Interacts (via MSP domain) with WDR44 (via FFAT motif); the interactions connect the endoplasmic reticulum (ER) with the endosomal tubule.

The protein resides in the endoplasmic reticulum membrane. Its function is as follows. Endoplasmic reticulum (ER)-anchored protein that mediates the formation of contact sites between the ER and endosomes via interaction with FFAT motif-containing proteins such as STARD3 or WDR44. Interacts with STARD3 in a FFAT motif phosphorylation dependent manner. Via interaction with WDR44 participates in neosynthesized protein export. Participates in the endoplasmic reticulum unfolded protein response (UPR) by inducing ERN1/IRE1 activity. Involved in cellular calcium homeostasis regulation. The sequence is that of Vesicle-associated membrane protein-associated protein B from Bos taurus (Bovine).